A 105-amino-acid polypeptide reads, in one-letter code: Nucleoid-associated protein RPE_4812 (105 aa).

The protein belongs to the YbaB/EbfC family. As to quaternary structure, homodimer.

Its subcellular location is the cytoplasm. The protein resides in the nucleoid. In terms of biological role, binds to DNA and alters its conformation. May be involved in regulation of gene expression, nucleoid organization and DNA protection. In Rhodopseudomonas palustris (strain BisA53), this protein is Nucleoid-associated protein RPE_4812.